Here is a 293-residue protein sequence, read N- to C-terminus: Putative ribose uptake protein RbsU (293 aa).

The next 10 membrane-spanning stretches (helical) occupy residues 5–24 (ALLI…TVAS), 34–51 (IIGA…LAVV), 58–80 (TGTN…IITF), 95–114 (TTAF…LGNW), 121–138 (IIGF…RMTV), 153–170 (RAVV…LYSA), 177–199 (IDGL…IYGF), 212–234 (ITWL…LISA), 241–263 (LATG…IYFL), and 273–292 (VITI…TVFI).

The protein belongs to the GRP transporter (TC 2.A.7.5) family.

It is found in the cell membrane. Could be involved in the uptake of ribose. In Staphylococcus aureus (strain COL), this protein is Putative ribose uptake protein RbsU (rbsU).